Consider the following 261-residue polypeptide: Ribonuclease 3 (261 aa).

Residues 20-144 enclose the RNase III domain; it reads YFALYRMLGF…FIGAIYLDKG (125 aa). E62 lines the Mg(2+) pocket. D66 is a catalytic residue. 2 residues coordinate Mg(2+): N130 and E133. The active site involves E133. The region spanning 172–241 is the DRBM domain; sequence NFKSKLFEWC…SQMTWRKIRT (70 aa).

This sequence belongs to the ribonuclease III family. Homodimer. The cofactor is Mg(2+).

It is found in the cytoplasm. It carries out the reaction Endonucleolytic cleavage to 5'-phosphomonoester.. Functionally, digests double-stranded RNA. Involved in the processing of primary rRNA transcript to yield the immediate precursors to the large and small rRNAs (23S and 16S). Processes some mRNAs, and tRNAs when they are encoded in the rRNA operon. Processes pre-crRNA and tracrRNA of type II CRISPR loci if present in the organism. This Azobacteroides pseudotrichonymphae genomovar. CFP2 protein is Ribonuclease 3.